The following is a 1119-amino-acid chain: DNA-directed RNA polymerase subunit beta (1119 aa).

This sequence belongs to the RNA polymerase beta chain family. The RNAP catalytic core consists of 2 alpha, 1 beta, 1 beta' and 1 omega subunit. When a sigma factor is associated with the core the holoenzyme is formed, which can initiate transcription.

It catalyses the reaction RNA(n) + a ribonucleoside 5'-triphosphate = RNA(n+1) + diphosphate. DNA-dependent RNA polymerase catalyzes the transcription of DNA into RNA using the four ribonucleoside triphosphates as substrates. In Thermus thermophilus (strain ATCC 27634 / DSM 579 / HB8), this protein is DNA-directed RNA polymerase subunit beta.